The primary structure comprises 608 residues: Kinetochore protein NUF2 (608 aa).

Residues 121-125 (IGNLR) form a required for nuclear localization and function region. 2 coiled-coil regions span residues 176 to 319 (FESQ…QQKL) and 358 to 460 (REKL…IEEE).

The protein belongs to the NUF2 family.

Its subcellular location is the chromosome. It is found in the centromere. The protein resides in the kinetochore. Functionally, required for anchoring centrosomal cores to the nuclear periphery. Plays a role in chromosome segregation but is dispensable for centromere clustering. In Toxoplasma gondii (strain ATCC 50611 / Me49), this protein is Kinetochore protein NUF2.